Reading from the N-terminus, the 245-residue chain is Phycoerythrobilin:ferredoxin oxidoreductase (245 aa).

This sequence belongs to the HY2 family.

It catalyses the reaction (3Z)-phycoerythrobilin + oxidized 2[4Fe-4S]-[ferredoxin] = 15,16-dihydrobiliverdin + reduced 2[4Fe-4S]-[ferredoxin] + 2 H(+). In terms of biological role, catalyzes the two-electron reduction of the C2 and C3(1) diene system of 15,16-dihydrobiliverdin. The sequence is that of Phycoerythrobilin:ferredoxin oxidoreductase (pebB) from Gloeobacter violaceus (strain ATCC 29082 / PCC 7421).